The following is a 263-amino-acid chain: Receptor-transporting protein 1 (263 aa).

The Cytoplasmic portion of the chain corresponds to 1–238 (MRIFRPWRLR…QTGSGWNFCS (238 aa)). Residues 88-197 (ASGRFHCSWC…GEFCEACQEG (110 aa)) form a 3CxxC-type zinc finger. The helical transmembrane segment at 239–259 (IPWCLFWATVLLLIIYLQFSF) threads the bilayer. Over 260-263 (RSSV) the chain is Extracellular.

This sequence belongs to the TMEM7 family. In terms of assembly, interacts with olfactory receptors. Expressed in testis.

It is found in the cell membrane. In terms of biological role, specifically promotes functional cell surface expression of olfactory receptors, but not of other GPCRs. This chain is Receptor-transporting protein 1 (RTP1), found in Homo sapiens (Human).